The chain runs to 107 residues: U1-lycotoxin-Ls1b (107 aa).

An N-terminal signal peptide occupies residues 1-20 (MMKVLVVVALLVTLISYSSG). Residues 21 to 41 (EGIDDLEADELLSLMANEQTR) constitute a propeptide that is removed on maturation. 4 cysteine pairs are disulfide-bonded: Cys44/Cys59, Cys51/Cys68, Cys58/Cys86, and Cys70/Cys84.

This sequence belongs to the neurotoxin 19 (CSTX) family. 04 (U1-Lctx) subfamily. Expressed by the venom gland.

The protein localises to the secreted. The chain is U1-lycotoxin-Ls1b from Lycosa singoriensis (Wolf spider).